The chain runs to 24 residues: Ascaphin-3 (24 aa).

In terms of tissue distribution, expressed by the skin glands.

It localises to the secreted. Functionally, antimicrobial peptide that shows higher potency against Gram-negative bacteria than against Gram-positive bacteria. Has a very week hemolytic activity. In Ascaphus truei (Coastal tailed frog), this protein is Ascaphin-3.